The following is a 181-amino-acid chain: ADP-ribosylation factor-like protein 1 (181 aa).

A lipid anchor (N-myristoyl glycine) is attached at glycine 2. GTP contacts are provided by residues glycine 24–threonine 31, threonine 45–threonine 48, glycine 70, asparagine 126–aspartate 129, and alanine 160–threonine 161. Mg(2+)-binding residues include threonine 31 and threonine 48.

It belongs to the small GTPase superfamily. Arf family. The GTP-bound form interacts with GOLGA1. The GTP-bound form interacts with GOLGA4 and RGPD8. The GTP-bound form directly interacts with ARFIP2. Binds to SCOC, preferentially in its GTP-bound form. May interact with UNC119. Interacts with ARFIP1; this interaction directs ARFIP1 to the trans-Golgi membranes. Interacts with ARFGEF1 (via N-terminus).

The protein localises to the golgi apparatus membrane. The protein resides in the golgi apparatus. It localises to the trans-Golgi network membrane. It is found in the membrane. GTP-binding protein that recruits several effectors, such as golgins, arfaptins and Arf-GEFs to the trans-Golgi network, and modulates their functions at the Golgi complex. Plays thereby a role in a wide range of fundamental cellular processes, including cell polarity, innate immunity, or protein secretion mediated by arfaptins, which were shown to play a role in maintaining insulin secretion from pancreatic beta cells. In Bos taurus (Bovine), this protein is ADP-ribosylation factor-like protein 1 (ARL1).